The sequence spans 435 residues: MSETPIVSNHDLGKYVDQKVVIQGWVHGIRGSNARQFLSLRNSGKILQVLAEKEILGEEVFQTVKHLRQETSVTVIGNLVKNEKSPIGFELVMESIQIVGESENYPITPKEHGIDFLISQRHLWLRSSKQLAILRVRDNLSFAIRKYFHERDFLLIDTPILTGSVGESAGTLFSTEYFDLGNAYLAQTGQLYLETAIFAHNKVFCYGPTFRAEKSKTRRHLTEFWMVEAEVAFATHAENLKLQEDFVKTVIKETVQNSFQDLKVLERDPAPLLAYLEKDFPVIDYTKALEILQSKGEDIVWGDDINSEREQILTVEFGGPVFIQKYPREAKAFYMKVNPEDPRTVLNADLIAPDGVGEIIGGSEREENYENIVQRLKEEKLPVESYDWYLDLRKYGSVPHSGFGLGSERLIAWICGLAHVRECIPFPRMMERLYP.

The protein belongs to the class-II aminoacyl-tRNA synthetase family. In terms of assembly, homodimer.

Its subcellular location is the cytoplasm. The enzyme catalyses tRNA(Asn) + L-asparagine + ATP = L-asparaginyl-tRNA(Asn) + AMP + diphosphate + H(+). The sequence is that of Asparagine--tRNA ligase from Leptospira interrogans serogroup Icterohaemorrhagiae serovar copenhageni (strain Fiocruz L1-130).